Consider the following 197-residue polypeptide: Phosphoheptose isomerase (197 aa).

In terms of domain architecture, SIS spans 34–196; it reads MVQCLLGGNK…DRTLFPQDEQ (163 aa). Substrate is bound at residue 49-51; it reads NGG. Histidine 58 and glutamate 62 together coordinate Zn(2+). Residues glutamate 62, 91–92, 117–119, serine 122, and glutamine 172 each bind substrate; these read ND and STS. Positions 172 and 180 each coordinate Zn(2+).

Belongs to the SIS family. GmhA subfamily. In terms of assembly, homotetramer. It depends on Zn(2+) as a cofactor.

The protein localises to the cytoplasm. The catalysed reaction is 2 D-sedoheptulose 7-phosphate = D-glycero-alpha-D-manno-heptose 7-phosphate + D-glycero-beta-D-manno-heptose 7-phosphate. The protein operates within carbohydrate biosynthesis; D-glycero-D-manno-heptose 7-phosphate biosynthesis; D-glycero-alpha-D-manno-heptose 7-phosphate and D-glycero-beta-D-manno-heptose 7-phosphate from sedoheptulose 7-phosphate: step 1/1. Functionally, catalyzes the isomerization of sedoheptulose 7-phosphate in D-glycero-D-manno-heptose 7-phosphate. This chain is Phosphoheptose isomerase, found in Shewanella piezotolerans (strain WP3 / JCM 13877).